Reading from the N-terminus, the 427-residue chain is Glutamate-1-semialdehyde 2,1-aminomutase (427 aa).

Lys-265 bears the N6-(pyridoxal phosphate)lysine mark.

This sequence belongs to the class-III pyridoxal-phosphate-dependent aminotransferase family. HemL subfamily. Homodimer. Requires pyridoxal 5'-phosphate as cofactor.

The protein resides in the cytoplasm. It carries out the reaction (S)-4-amino-5-oxopentanoate = 5-aminolevulinate. Its pathway is porphyrin-containing compound metabolism; protoporphyrin-IX biosynthesis; 5-aminolevulinate from L-glutamyl-tRNA(Glu): step 2/2. The sequence is that of Glutamate-1-semialdehyde 2,1-aminomutase from Pseudomonas aeruginosa (strain LESB58).